Reading from the N-terminus, the 179-residue chain is MAKLHDKYQETVSPELQKKFGFTSVMQVPRIEKITLNMGVGEAVADKKVMEHALRDMTAIAGQKPVVTVARKSVAGFKIREGYPIGCKVTLRGERMWEFLERLVDIAIPRIRDFRGMSTKSFDGRGNYAMGVREQIIFPEIQYDKIDKIRGMDIVITTSAKNDEEGRALLEAFNFPFKK.

Belongs to the universal ribosomal protein uL5 family. As to quaternary structure, part of the 50S ribosomal subunit; part of the 5S rRNA/L5/L18/L25 subcomplex. Contacts the 5S rRNA and the P site tRNA. Forms a bridge to the 30S subunit in the 70S ribosome.

This is one of the proteins that bind and probably mediate the attachment of the 5S RNA into the large ribosomal subunit, where it forms part of the central protuberance. In the 70S ribosome it contacts protein S13 of the 30S subunit (bridge B1b), connecting the 2 subunits; this bridge is implicated in subunit movement. Contacts the P site tRNA; the 5S rRNA and some of its associated proteins might help stabilize positioning of ribosome-bound tRNAs. This Shewanella woodyi (strain ATCC 51908 / MS32) protein is Large ribosomal subunit protein uL5.